The primary structure comprises 70 residues: Small ribosomal subunit protein bS21 (70 aa).

It belongs to the bacterial ribosomal protein bS21 family.

The chain is Small ribosomal subunit protein bS21 from Methylibium petroleiphilum (strain ATCC BAA-1232 / LMG 22953 / PM1).